Consider the following 81-residue polypeptide: Probable antimicrobial peptide Con13 (81 aa).

The first 22 residues, 1–22, serve as a signal peptide directing secretion; the sequence is MNRKLLLVFLVVAMLVMQPAEA. The propeptide occupies 66 to 81; it reads EAGQIPFDEFMDVLYS.

It belongs to the non-disulfide-bridged peptide (NDBP) superfamily. Long chain multifunctional peptide (group 2) family. As to expression, expressed by the venom gland.

The protein localises to the secreted. It is found in the target cell membrane. Its function is as follows. At high concentrations, acts as a pore former in cellular membranes and causes the leakage of the cells. At submicromolar concentrations, degranulates granulocytes and has a weak hemolytic activity against human erythrocytes. Also strongly inhibits the production of superoxide anions. Has a strong antibacterial activity against Gram-negative bacteria but is less active against Gram-positive bacteria. Also has antifungal activity. This Opisthacanthus cayaporum (South American scorpion) protein is Probable antimicrobial peptide Con13.